We begin with the raw amino-acid sequence, 295 residues long: 4-diphosphocytidyl-2-C-methyl-D-erythritol kinase (295 aa).

K22 is an active-site residue. 106-116 (PAGGGFGGGSS) provides a ligand contact to ATP. D148 is an active-site residue.

The protein belongs to the GHMP kinase family. IspE subfamily.

The catalysed reaction is 4-CDP-2-C-methyl-D-erythritol + ATP = 4-CDP-2-C-methyl-D-erythritol 2-phosphate + ADP + H(+). It functions in the pathway isoprenoid biosynthesis; isopentenyl diphosphate biosynthesis via DXP pathway; isopentenyl diphosphate from 1-deoxy-D-xylulose 5-phosphate: step 3/6. Catalyzes the phosphorylation of the position 2 hydroxy group of 4-diphosphocytidyl-2C-methyl-D-erythritol. The chain is 4-diphosphocytidyl-2-C-methyl-D-erythritol kinase from Xanthomonas oryzae pv. oryzae (strain MAFF 311018).